A 274-amino-acid chain; its full sequence is uncharacterized protein (274 aa).

Positions 1–15 are enriched in basic and acidic residues; the sequence is MEESKTKRKEDRIDL. The disordered stretch occupies residues 1–40; the sequence is MEESKTKRKEDRIDLKNTPPQKKSKRDSTNDETARTSLRS. Positions 41 to 87 constitute a G-patch domain; the sequence is IMPRGYKMMENMGYKEGETLGSNESALKEPIKVEINTKRRGIRAEKP.

The protein localises to the cytoplasm. It localises to the nucleus. This is an uncharacterized protein from Saccharomyces cerevisiae (strain ATCC 204508 / S288c) (Baker's yeast).